A 339-amino-acid chain; its full sequence is Phosphate acyltransferase (339 aa).

Belongs to the PlsX family. Homodimer. Probably interacts with PlsY.

It is found in the cytoplasm. It carries out the reaction a fatty acyl-[ACP] + phosphate = an acyl phosphate + holo-[ACP]. It functions in the pathway lipid metabolism; phospholipid metabolism. Catalyzes the reversible formation of acyl-phosphate (acyl-PO(4)) from acyl-[acyl-carrier-protein] (acyl-ACP). This enzyme utilizes acyl-ACP as fatty acyl donor, but not acyl-CoA. This Methylococcus capsulatus (strain ATCC 33009 / NCIMB 11132 / Bath) protein is Phosphate acyltransferase.